Reading from the N-terminus, the 114-residue chain is Large ribosomal subunit protein uL22 (114 aa).

Belongs to the universal ribosomal protein uL22 family. As to quaternary structure, part of the 50S ribosomal subunit.

In terms of biological role, this protein binds specifically to 23S rRNA; its binding is stimulated by other ribosomal proteins, e.g. L4, L17, and L20. It is important during the early stages of 50S assembly. It makes multiple contacts with different domains of the 23S rRNA in the assembled 50S subunit and ribosome. Its function is as follows. The globular domain of the protein is located near the polypeptide exit tunnel on the outside of the subunit, while an extended beta-hairpin is found that lines the wall of the exit tunnel in the center of the 70S ribosome. This is Large ribosomal subunit protein uL22 from Methylacidiphilum infernorum (isolate V4) (Methylokorus infernorum (strain V4)).